The chain runs to 837 residues: Neural cell adhesion molecule 2 (837 aa).

The N-terminal stretch at 1-19 (MSLLLSFYLLGLLVSSGQA) is a signal peptide. At 20-697 (LLQVTISLSK…PNIIKDTLFN (678 aa)) the chain is on the extracellular side. Ig-like C2-type domains follow at residues 21-108 (LQVT…ATVV), 113-202 (QKLT…RDII), 208-297 (PPAI…AFLQ), 302-396 (PHII…MYLD), and 401-491 (PKFI…YILA). Intrachain disulfides connect Cys42/Cys93 and Cys136/Cys186. N-linked (GlcNAc...) asparagine glycans are attached at residues Asn177 and Asn219. Cysteines 232 and 281 form a disulfide. A glycan (N-linked (GlcNAc...) asparagine) is linked at Asn309. Residues Cys322 and Cys380 are joined by a disulfide bond. N-linked (GlcNAc...) asparagine glycans are attached at residues Asn406, Asn419, Asn445, Asn474, and Asn562. Cysteines 422 and 475 form a disulfide. 2 Fibronectin type-III domains span residues 498-591 (SPYG…TLPV) and 593-688 (EPSP…PPKP). A helical transmembrane segment spans residues 698–718 (GLGLGAVIGLGVAALLLILVV). At 719 to 837 (TDVSCFFIRQ…IQSKEDDSKA (119 aa)) the chain is on the cytoplasmic side. Residues 764–785 (GSKEPIVEMRTEDERVTNHEDG) are compositionally biased toward basic and acidic residues. The disordered stretch occupies residues 764–818 (GSKEPIVEMRTEDERVTNHEDGSPVNEPNETTPLTEPEKLPLKEEDGKEALNPET). Ser765 carries the phosphoserine modification. Thr780 carries the phosphothreonine modification. Phosphoserine is present on Ser786. Positions 789–798 (NEPNETTPLT) are enriched in low complexity. Residues 799–814 (EPEKLPLKEEDGKEAL) show a composition bias toward basic and acidic residues.

As to expression, expressed most strongly in adult and fetal brain.

Its subcellular location is the cell membrane. In terms of biological role, may play important roles in selective fasciculation and zone-to-zone projection of the primary olfactory axons. The protein is Neural cell adhesion molecule 2 (NCAM2) of Homo sapiens (Human).